A 170-amino-acid polypeptide reads, in one-letter code: Double homeobox protein 1 (170 aa).

2 DNA-binding regions (homeobox) span residues 19–78 (GRRM…LRQH) and 94–153 (GRRK…RGQS). A disordered region spans residues 75-100 (LRQHRRQSRPWPGRRDPQKGRRKRTA).

The protein belongs to the paired homeobox family. Expressed in rhabdomyosarcoma TE671 cells as well as in several other normal and cancer cells.

Its subcellular location is the nucleus. Probable transcription activator. Binds the P5 DNA element sequence 5'-GATCTGAGTCTAATTGAGAATTACTGTAC-3'. In Homo sapiens (Human), this protein is Double homeobox protein 1 (DUX1).